The sequence spans 82 residues: Small ribosomal subunit protein uS17 (82 aa).

This sequence belongs to the universal ribosomal protein uS17 family. In terms of assembly, part of the 30S ribosomal subunit.

Its function is as follows. One of the primary rRNA binding proteins, it binds specifically to the 5'-end of 16S ribosomal RNA. In Shewanella piezotolerans (strain WP3 / JCM 13877), this protein is Small ribosomal subunit protein uS17.